We begin with the raw amino-acid sequence, 260 residues long: Sphinganine C4-monooxygenase 1 (260 aa).

The next 3 helical transmembrane spans lie at L11–L31, S55–F75, and F92–F112. The region spanning F99–T235 is the Fatty acid hydroxylase domain. The Histidine box-1 signature appears at H114 to H118. The Histidine box-2 signature appears at H128–H132. Residues Y207–Q213 carry the Histidine box-3 motif.

This sequence belongs to the sterol desaturase family. The cofactor is Fe cation. In terms of tissue distribution, ubiquitous, with higher levels in flowers and roots.

It is found in the endoplasmic reticulum membrane. It catalyses the reaction a dihydroceramide + 2 Fe(II)-[cytochrome b5] + O2 + 2 H(+) = a phytoceramide + 2 Fe(III)-[cytochrome b5] + H2O. It participates in membrane lipid metabolism; sphingolipid biosynthesis. In terms of biological role, involved in sphingolipid trihydroxy long-chain base (4-hydroxysphinganine) biosynthesis. Can use C18- and C20-sphinganine as substrates to produce C18- and C20-phytosphinganines (D-ribo-2-amino-1,3,4-trihydroxyoctadecane and -eicosane). This chain is Sphinganine C4-monooxygenase 1 (SBH1), found in Arabidopsis thaliana (Mouse-ear cress).